A 1073-amino-acid chain; its full sequence is Carbamoyl phosphate synthase large chain (1073 aa).

The segment at 1 to 402 (MPRRIDVRKV…ALQKAIRMLD (402 aa)) is carboxyphosphate synthetic domain. ATP-binding residues include Arg-129, Arg-169, Gly-175, Gly-176, Lys-208, Leu-210, Glu-215, Gly-241, Val-242, His-243, Gln-284, and Glu-299. Positions 133–328 (RETMMKAGLP…LAYIAAKLAL (196 aa)) constitute an ATP-grasp 1 domain. Residues Gln-284, Glu-299, and Asn-301 each contribute to the Mg(2+) site. Mn(2+) contacts are provided by Gln-284, Glu-299, and Asn-301. Residues 403–555 (IGEPGVVAGP…MSYNAYEDDE (153 aa)) form an oligomerization domain region. Positions 556 to 944 (PITTGRPRLI…LKSWLSVQGN (389 aa)) are carbamoyl phosphate synthetic domain. The region spanning 681–871 (SQLLEELGIK…LMRAAAEAAL (191 aa)) is the ATP-grasp 2 domain. Residues Arg-717, Lys-756, Leu-758, Glu-763, Gly-787, Val-788, His-789, Ser-790, Gln-830, and Glu-842 each contribute to the ATP site. Gln-830, Glu-842, and Asn-844 together coordinate Mg(2+). Mn(2+)-binding residues include Gln-830, Glu-842, and Asn-844. Residues 944-1073 (NRIPPAGSIV…EYWGPNVEPF (130 aa)) enclose the MGS-like domain. Residues 945-1073 (RIPPAGSIVL…EYWGPNVEPF (129 aa)) form an allosteric domain region.

Belongs to the CarB family. As to quaternary structure, composed of two chains; the small (or glutamine) chain promotes the hydrolysis of glutamine to ammonia, which is used by the large (or ammonia) chain to synthesize carbamoyl phosphate. Tetramer of heterodimers (alpha,beta)4. Mg(2+) is required as a cofactor. The cofactor is Mn(2+).

It catalyses the reaction hydrogencarbonate + L-glutamine + 2 ATP + H2O = carbamoyl phosphate + L-glutamate + 2 ADP + phosphate + 2 H(+). It carries out the reaction hydrogencarbonate + NH4(+) + 2 ATP = carbamoyl phosphate + 2 ADP + phosphate + 2 H(+). Its pathway is amino-acid biosynthesis; L-arginine biosynthesis; carbamoyl phosphate from bicarbonate: step 1/1. It participates in pyrimidine metabolism; UMP biosynthesis via de novo pathway; (S)-dihydroorotate from bicarbonate: step 1/3. Functionally, large subunit of the glutamine-dependent carbamoyl phosphate synthetase (CPSase). CPSase catalyzes the formation of carbamoyl phosphate from the ammonia moiety of glutamine, carbonate, and phosphate donated by ATP, constituting the first step of 2 biosynthetic pathways, one leading to arginine and/or urea and the other to pyrimidine nucleotides. The large subunit (synthetase) binds the substrates ammonia (free or transferred from glutamine from the small subunit), hydrogencarbonate and ATP and carries out an ATP-coupled ligase reaction, activating hydrogencarbonate by forming carboxy phosphate which reacts with ammonia to form carbamoyl phosphate. This chain is Carbamoyl phosphate synthase large chain, found in Hyperthermus butylicus (strain DSM 5456 / JCM 9403 / PLM1-5).